A 233-amino-acid chain; its full sequence is Endonuclease V (233 aa).

Mg(2+)-binding residues include Asp48 and Asp116.

It belongs to the endonuclease V family. It depends on Mg(2+) as a cofactor.

It localises to the cytoplasm. It carries out the reaction Endonucleolytic cleavage at apurinic or apyrimidinic sites to products with a 5'-phosphate.. Its function is as follows. DNA repair enzyme involved in the repair of deaminated bases. Selectively cleaves double-stranded DNA at the second phosphodiester bond 3' to a deoxyinosine leaving behind the intact lesion on the nicked DNA. This Streptomyces coelicolor (strain ATCC BAA-471 / A3(2) / M145) protein is Endonuclease V.